A 192-amino-acid chain; its full sequence is Small ribosomal subunit protein bS16 (192 aa).

Positions 153–192 (AEAKAKAEAEAAAAAEEAAETEETPVEAAAEEAPAAESAE) are disordered. Positions 178–192 (VEAAAEEAPAAESAE) are enriched in low complexity.

It belongs to the bacterial ribosomal protein bS16 family.

This is Small ribosomal subunit protein bS16 from Porphyromonas gingivalis (strain ATCC BAA-308 / W83).